The following is a 1522-amino-acid chain: MAKDWQDARLGQCHRLEDYSNVAINYTGPYLTPSGTMAYHPGNAPLFTQAPPHTNPQGPPPFPLFNSISPVYDPATGRLLYRNVNTQVSHTAIPNPANGYAAVYGGPPSQLPPPPQPQSHPNVTVISASPARAIEQQPTILSSTDSNIPRPGTVKSSASPFVPNQNPSAPPPPPQEYRQLNVTDALSYLDLVKLQFHQEPEIYNEFLDIMKEFKSQAIETPEVITRVSKLFAGYPNLIQGFNTFLPPGYSIEISSADPGSLAGIHITTPQGPLMINDLGKTTAPPPPHGSTTPLPAAASYTSMNMKQSSASHPVLQPPAPSTLQFNPSPSPAAPSYPPVDASVKQAADLDQAINFVNNVKNRFSHKPEAYNSFLDILKSYQHDQRPIQLVYFQVSQLFAEAPDLLEEFKRFLPDVSVNAPAETQDKSTVVPQESATATPKRSPSATPTSALPPIGKFAPPTTAKAQPAPEKRRGEPAVQTRNHSKRTRTATSSVEETTPRAFNVPIAQNKNPSELEFLEHARQYLANESKYNEFIKLLELYSQEVFDKNALVERCYVFFGSNEHLMNWLKDLVKYNPANPIPVPRPRVDLTQCKSCGPSYRLLPKIELLLPCSGRDDLCWTILNDAWVSFPTLASEDSGFIAHRKNQFEENLHKLEEERYEYDRHIGANMRFIELLQIHADKMLKMSEVEKANWTLPSNLGGKSVSIYHKVIKKVYGKEHAQQIIENLQKNPSVTIPIVLERLKKKDREWRSLQNHWNELWHDIEEKNFYRSLDHQGVSFKSVDKKSTTPKFLISELRNLAQQQKVELSEGKVTPSHQFLFSYKDPNIITDIARLFGVFLIHGSTHSAEDNEKMSNFLRSFLSLFFDVPYDSFIPYLPTHFNEEESDIDSLSSSLIEKPRASSSPIHHANNNGLRLLKDVLKKTYRGARENRSSVKEDYVSESTERTPDASEIDEHISEHEENDDESSSVFSTGEVWVNCKFTDTDGSLLDDGTKLSDRSVYNLFGNMSLYCFFRLFHTLYSRLEEIKNLEQMAYSKQHDVKSNPVAVELGLVRHPSERLGFALPTADTVYEQAIQLCERLMEGEIDQNGFEDALRCLYGIHAFRLYTVEKLVTSIIKQLHSVTTNRRLAQVFMYYEKDRVQRRTSPRQQIMYRIQTETAFGPDENLCCIDWNSQTRQSAIRLMGREDLTMGTLKSDAEKWCYYIGSYIMSSPTEGILPEHVRIPFLRKCLPSDEGNEDDESSSVVKSANAIITSFLESGLALTIPINTVKIRYENGTEDVFARNSEQVYNGPYDKIRDYRQSKWREWLNSDEGWTQGLSKDKVRRIKPCTIESLFNESTLRSGKAERFSENAGVESIGKKGKNLLNESGNGKKLDKGLPPKVNGKSSVTRGNKTNLKARNGRNNDDSSNKINLSEKEKEKESIEDEEKNREGSMSPVAKHASDVEDDHDVAKSTAPDFETSSHRPERSSEKKSPSPVFTSVKQTAENDADNEDDKTDMDDQTEETLDADNTMEEEPSKDDL.

Positions 139-174 (TILSSTDSNIPRPGTVKSSASPFVPNQNPSAPPPPP) are disordered. Positions 178-248 (RQLNVTDALS…QGFNTFLPPG (71 aa)) constitute a PAH 1 domain. Residues 307–339 (QSSASHPVLQPPAPSTLQFNPSPSPAAPSYPPV) are disordered. A compositionally biased stretch (pro residues) spans 328–337 (SPSPAAPSYP). Residues 345–415 (QAADLDQAIN…EEFKRFLPDV (71 aa)) form the PAH 2 domain. Disordered stretches follow at residues 422-504 (ETQD…AFNV), 928-968 (AREN…DESS), and 1343-1522 (SGKA…KDDL). The span at 426–441 (KSTVVPQESATATPKR) shows a compositional bias: polar residues. Phosphoserine is present on Ser442. The segment covering 442–468 (SPSATPTSALPPIGKFAPPTTAKAQPA) has biased composition (low complexity). Thr446 bears the Phosphothreonine mark. The PAH 3 domain maps to 504–576 (VPIAQNKNPS…NWLKDLVKYN (73 aa)). The span at 928–960 (ARENRSSVKEDYVSESTERTPDASEIDEHISEH) shows a compositional bias: basic and acidic residues. The span at 1385 to 1398 (GKSSVTRGNKTNLK) shows a compositional bias: polar residues. Over residues 1403–1432 (RNNDDSSNKINLSEKEKEKESIEDEEKNRE) the composition is skewed to basic and acidic residues. Residue Ser1443 is modified to Phosphoserine. Residues 1461 to 1474 (TSSHRPERSSEKKS) show a composition bias toward basic and acidic residues. The span at 1478 to 1487 (VFTSVKQTAE) shows a compositional bias: polar residues. Residues 1488-1522 (NDADNEDDKTDMDDQTEETLDADNTMEEEPSKDDL) are compositionally biased toward acidic residues.

The protein localises to the nucleus. Functionally, has a role in modulating the nuclear import of TF1 virus-like particles. Essential for viability. This chain is Paired amphipathic helix protein pst1 (pst1), found in Schizosaccharomyces pombe (strain 972 / ATCC 24843) (Fission yeast).